Consider the following 60-residue polypeptide: MPKIEVKNDDLELALKKFKRVSLEIRRLAQRHEYHLRKGMRLREKRKIAQKKRRKFRNMV.

It belongs to the bacterial ribosomal protein bS21 family.

This Mycoplasma pneumoniae (strain ATCC 29342 / M129 / Subtype 1) (Mycoplasmoides pneumoniae) protein is Small ribosomal subunit protein bS21 (rpsU).